Here is a 286-residue protein sequence, read N- to C-terminus: Shikimate dehydrogenase (NADP(+)) (286 aa).

Shikimate contacts are provided by residues 22 to 24 and threonine 71; that span reads SRS. Lysine 75 serves as the catalytic Proton acceptor. Glutamate 87 is an NADP(+) binding site. Asparagine 96 and aspartate 111 together coordinate shikimate. NADP(+)-binding positions include 136 to 140, 160 to 165, and isoleucine 225; these read GAGGA and NRTPER. Tyrosine 227 is a binding site for shikimate. Residue glycine 248 participates in NADP(+) binding.

Belongs to the shikimate dehydrogenase family. As to quaternary structure, homodimer.

It carries out the reaction shikimate + NADP(+) = 3-dehydroshikimate + NADPH + H(+). The protein operates within metabolic intermediate biosynthesis; chorismate biosynthesis; chorismate from D-erythrose 4-phosphate and phosphoenolpyruvate: step 4/7. Functionally, involved in the biosynthesis of the chorismate, which leads to the biosynthesis of aromatic amino acids. Catalyzes the reversible NADPH linked reduction of 3-dehydroshikimate (DHSA) to yield shikimate (SA). The chain is Shikimate dehydrogenase (NADP(+)) from Sinorhizobium medicae (strain WSM419) (Ensifer medicae).